We begin with the raw amino-acid sequence, 387 residues long: L-aspartate:5-guanidino-3-methyl-2-oxopentanoate transaminase (387 aa).

An N6-(pyridoxal phosphate)lysine modification is found at Lys-237.

It belongs to the class-I pyridoxal-phosphate-dependent aminotransferase family. The cofactor is pyridoxal 5'-phosphate.

It catalyses the reaction (3R)-5-guanidino-3-methyl-2-oxopentanoate + L-aspartate = (3R)-3-methyl-L-arginine + oxaloacetate. It functions in the pathway antibiotic biosynthesis. Aminotransferase involved in the formation of the rare amino acid 3-methylarginine (MeArg), which is used as a potent antibiotic against the closely related soybean pathogen P.syringae pv. glycinea. Probably catalyzes transamination from the donor L-aspartate to 5-guanidino-3-methyl-2-oxopentanoic acid, generating 3-methylarginine. This chain is L-aspartate:5-guanidino-3-methyl-2-oxopentanoate transaminase, found in Pseudomonas syringae pv. syringae.